Here is a 415-residue protein sequence, read N- to C-terminus: Tyrosine--tRNA ligase (415 aa).

Tyrosine 34 lines the L-tyrosine pocket. A 'HIGH' region motif is present at residues 39–48 (PTADSLHLGH). Residues tyrosine 164 and glutamine 168 each contribute to the L-tyrosine site. Residues 226–230 (KFGKS) carry the 'KMSKS' region motif. Position 229 (lysine 229) interacts with ATP. Residues 348–415 (KNVVDFLVDG…KKKYFLGKVK (68 aa)) enclose the S4 RNA-binding domain.

Belongs to the class-I aminoacyl-tRNA synthetase family. TyrS type 1 subfamily. In terms of assembly, homodimer.

The protein resides in the cytoplasm. It carries out the reaction tRNA(Tyr) + L-tyrosine + ATP = L-tyrosyl-tRNA(Tyr) + AMP + diphosphate + H(+). Catalyzes the attachment of tyrosine to tRNA(Tyr) in a two-step reaction: tyrosine is first activated by ATP to form Tyr-AMP and then transferred to the acceptor end of tRNA(Tyr). This Leuconostoc mesenteroides subsp. mesenteroides (strain ATCC 8293 / DSM 20343 / BCRC 11652 / CCM 1803 / JCM 6124 / NCDO 523 / NBRC 100496 / NCIMB 8023 / NCTC 12954 / NRRL B-1118 / 37Y) protein is Tyrosine--tRNA ligase.